We begin with the raw amino-acid sequence, 119 residues long: Hemerythrin subunit A (119 aa).

His26, His55, Glu59, His74, His78, His107, and Asp112 together coordinate Fe cation.

Belongs to the hemerythrin family.

Hemerythrin is a respiratory protein in blood cells of certain marine worms. The oxygen-binding site in each chain contains two iron atoms. The protein is Hemerythrin subunit A of Sipunculus nudus (Sipunculan worm).